The sequence spans 502 residues: Glycerol kinase (502 aa).

Threonine 14 contacts ADP. Positions 14, 15, and 16 each coordinate ATP. Threonine 14 lines the sn-glycerol 3-phosphate pocket. Arginine 18 contributes to the ADP binding site. Sn-glycerol 3-phosphate-binding residues include arginine 84, glutamate 85, and tyrosine 136. Glycerol-binding residues include arginine 84, glutamate 85, and tyrosine 136. Histidine 232 is subject to Phosphohistidine; by HPr. Aspartate 246 is a sn-glycerol 3-phosphate binding site. Residues aspartate 246 and glutamine 247 each contribute to the glycerol site. The ADP site is built by threonine 268 and glycine 311. 4 residues coordinate ATP: threonine 268, glycine 311, glutamine 315, and glycine 412. Residues glycine 412 and asparagine 416 each contribute to the ADP site.

Belongs to the FGGY kinase family. As to quaternary structure, homotetramer and homodimer (in equilibrium). Post-translationally, the phosphoenolpyruvate-dependent sugar phosphotransferase system (PTS), including enzyme I, and histidine-containing protein (HPr) are required for the phosphorylation, which leads to the activation of the enzyme.

It catalyses the reaction glycerol + ATP = sn-glycerol 3-phosphate + ADP + H(+). Its pathway is polyol metabolism; glycerol degradation via glycerol kinase pathway; sn-glycerol 3-phosphate from glycerol: step 1/1. With respect to regulation, activated by phosphorylation and inhibited by fructose 1,6-bisphosphate (FBP). Its function is as follows. Key enzyme in the regulation of glycerol uptake and metabolism. Catalyzes the phosphorylation of glycerol to yield sn-glycerol 3-phosphate. The sequence is that of Glycerol kinase from Streptococcus pneumoniae (strain Hungary19A-6).